A 130-amino-acid polypeptide reads, in one-letter code: Fluoride-specific ion channel FluC (130 aa).

Transmembrane regions (helical) follow at residues 7–27 (VLAI…LGLW), 36–56 (LGTL…VAVF), 69–89 (ALIT…AEVV), and 99–119 (LGFG…LAGI). Na(+)-binding residues include glycine 76 and threonine 79.

Belongs to the fluoride channel Fluc/FEX (TC 1.A.43) family.

It localises to the cell inner membrane. It carries out the reaction fluoride(in) = fluoride(out). With respect to regulation, na(+) is not transported, but it plays an essential structural role and its presence is essential for fluoride channel function. Functionally, fluoride-specific ion channel. Important for reducing fluoride concentration in the cell, thus reducing its toxicity. This Albidiferax ferrireducens (strain ATCC BAA-621 / DSM 15236 / T118) (Rhodoferax ferrireducens) protein is Fluoride-specific ion channel FluC.